An 842-amino-acid chain; its full sequence is Envelope glycoprotein H (842 aa).

The signal sequence occupies residues 1–20 (MRRPLCAALLAAAVLALAAG). Residues 21-802 (APAAARGGAG…AGHEAPTFSP (782 aa)) lie on the Virion surface side of the membrane. N-linked (GlcNAc...) asparagine; by host glycans are attached at residues Asn77 and Asn112. The tract at residues 240 to 303 (ERAAARLAVG…AAGPQRRAYV (64 aa)) is interaction with gL. 4 N-linked (GlcNAc...) asparagine; by host glycosylation sites follow: Asn617, Asn666, Asn760, and Asn783. A helical transmembrane segment spans residues 803–823 (AYVWASVGGALVAGTTIYAIA). Residues 824-842 (KMLCSSVPLARGYSSVPVF) lie on the Intravirion side of the membrane.

This sequence belongs to the herpesviridae glycoprotein H family. In terms of assembly, interacts with glycoprotein L (gL); this interaction is necessary for the correct processing and cell surface expression of gH. The heterodimer gH/gL seems to interact with gB trimers during fusion. Post-translationally, N-glycosylated, O-glycosylated, and sialylated.

It localises to the virion membrane. It is found in the host cell membrane. Its subcellular location is the host endosome membrane. Functionally, the heterodimer glycoprotein H-glycoprotein L is required for the fusion of viral and plasma membranes leading to virus entry into the host cell. Following initial binding to host receptor, membrane fusion is mediated by the fusion machinery composed of gB and the heterodimer gH/gL. May also be involved in the fusion between the virion envelope and the outer nuclear membrane during virion morphogenesis. This chain is Envelope glycoprotein H, found in Bos taurus (Bovine).